A 472-amino-acid chain; its full sequence is Bone morphogenetic protein 3 (472 aa).

Positions 1–22 (MAGASRLLFLWLGCFCVSLAQG) are cleaved as a signal peptide. A propeptide spanning residues 23-362 (ERPKPPFPEL…EQTLKKARRK (340 aa)) is cleaved from the precursor. Residues 27 to 37 (PPFPELRKAVP) are compositionally biased toward basic and acidic residues. Positions 27-53 (PPFPELRKAVPGDRTAGGGPDSELQPQ) are disordered. N-linked (GlcNAc...) asparagine glycosylation is found at Asn117, Asn141, Asn175, and Asn220. Positions 320-350 (PYKTLQAQAPEKSKNKKKQRKGPHRKSQTLQ) are disordered. Over residues 333–346 (KNKKKQRKGPHRKS) the composition is skewed to basic residues. Disulfide bonds link Cys370-Cys437, Cys399-Cys469, and Cys403-Cys471. N-linked (GlcNAc...) asparagine glycosylation occurs at Asn463.

It belongs to the TGF-beta family. Homodimer; disulfide-linked. Interacts with type II receptor ACVR2B. As to expression, expressed in adult and fetal cartilage.

It localises to the secreted. Growth factor of the TGF-beta superfamily that plays an essential role in developmental process by inducing and patterning early skeletal formation and by negatively regulating bone density. Antagonizes the ability of certain osteogenic BMPs to induce osteoprogenitor differentiation and ossification. Initiates signaling cascades by associating with type II receptor ACVR2B to activate SMAD2-dependent and SMAD-independent signaling cascades including TAK1 and JNK pathways. This chain is Bone morphogenetic protein 3 (BMP3), found in Homo sapiens (Human).